The chain runs to 362 residues: UPF0324 membrane protein YPO1307/y2878/YP_1285 (362 aa).

Transmembrane regions (helical) follow at residues 21-38 (YIPG…ALNV), 48-70 (GLGA…YPWL), 102-124 (VADV…FILA), 139-161 (VMLI…EPVL), 168-190 (VAVA…PWLY), 240-257 (MIRV…SAYL), 278-300 (WFAV…AVWV), 305-327 (TLDT…IGSI), and 334-356 (PLLL…NLFV).

The protein belongs to the UPF0324 family.

Its subcellular location is the cell membrane. The chain is UPF0324 membrane protein YPO1307/y2878/YP_1285 from Yersinia pestis.